Here is a 306-residue protein sequence, read N- to C-terminus: Agmatinase (306 aa).

The Mn(2+) site is built by H126, D149, H151, D153, D230, and D232.

The protein belongs to the arginase family. Agmatinase subfamily. It depends on Mn(2+) as a cofactor.

It catalyses the reaction agmatine + H2O = urea + putrescine. It participates in amine and polyamine biosynthesis; putrescine biosynthesis via agmatine pathway; putrescine from agmatine: step 1/1. Catalyzes the formation of putrescine from agmatine. The protein is Agmatinase of Escherichia coli (strain SE11).